The following is a 344-amino-acid chain: Putative 2-hydroxyacid dehydrogenase YoaD (344 aa).

NAD(+) is bound at residue D193. R251 is a catalytic residue. D275 is an NAD(+) binding site. The active site involves E280. H300 acts as the Proton donor in catalysis.

This sequence belongs to the D-isomer specific 2-hydroxyacid dehydrogenase family.

In Bacillus subtilis (strain 168), this protein is Putative 2-hydroxyacid dehydrogenase YoaD (yoaD).